We begin with the raw amino-acid sequence, 201 residues long: MDKFVKLTGVAAPLPVVNIDTDMIIPKDYLKTIKRTGLGTGLFAEARYNEDGTPNPDFVLNKPAYQNAKILVAGDNFGCGSSREHAPWALLDFGIRCVISTSFADIFYNNCFKNGILPIVVSQADLDKLMDDANRGSNAVLSIDLEAQEITGPDGGSIKFEIDAFKRHCLLNGLDDIGLTLEKAGAIDTFEKSTAASRPWA.

This sequence belongs to the LeuD family. LeuD type 1 subfamily. In terms of assembly, heterodimer of LeuC and LeuD.

The catalysed reaction is (2R,3S)-3-isopropylmalate = (2S)-2-isopropylmalate. It participates in amino-acid biosynthesis; L-leucine biosynthesis; L-leucine from 3-methyl-2-oxobutanoate: step 2/4. In terms of biological role, catalyzes the isomerization between 2-isopropylmalate and 3-isopropylmalate, via the formation of 2-isopropylmaleate. This Sinorhizobium fredii (strain NBRC 101917 / NGR234) protein is 3-isopropylmalate dehydratase small subunit.